The chain runs to 687 residues: Chloride channel protein ClC-Ka (687 aa).

4 helical membrane passes run 52–72 (FLMT…FALG), 161–181 (LFLG…AYLG), 202–222 (VAGA…GVLF), and 236–256 (YWRG…LAVF). Positions 259, 261, 278, and 281 each coordinate Ca(2+). 6 helical membrane-spanning segments follow: residues 282-302 (IFFF…YLYC), 325-345 (PLYA…PGVG), 396-416 (FTIF…LILA), 417-437 (TTIP…AAIG), 452-472 (IVAG…AGAA), and 486-506 (LLAF…MAVL). At 507–687 (AANAIAQSCQ…SALTNPPPAK (181 aa)) the chain is on the cytoplasmic side. CBS domains follow at residues 551–612 (MRRA…ARAS) and 628–686 (TEPV…PPPA).

The protein belongs to the chloride channel (TC 2.A.49) family. CLCNKA subfamily. As to quaternary structure, homodimer. Interacts with BSND. Expressed predominantly in the kidney.

The protein localises to the basolateral cell membrane. It catalyses the reaction chloride(in) = chloride(out). The enzyme catalyses bromide(in) = bromide(out). The catalysed reaction is nitrate(in) = nitrate(out). It carries out the reaction iodide(out) = iodide(in). Anion-selective channel permeable to small monovalent anions with ion selectivity for chloride &gt; bromide &gt; nitrate &gt; iodide. Forms a homodimeric channel where each subunit has its own ion conduction pathway. May conduct double-barreled currents controlled by two types of gates, two fast gates that control each subunit independently and a slow common gate that opens and shuts off both subunits simultaneously. Assembles with the regulatory subunit BSND/Barttin for sorting at the basolateral plasma membrane domain and functional switch to the ion conducting state. CLCNKA:BSND channels display mostly a linear current-voltage relationship with fast gating at negative potentials. Mediates transepithelial chloride transport from the lumen to interstitial compartment along the thin ascending limb of Henle's loop, contributing to generation of hypertonic medullary interstitium as a countercurrent system to achieve urine concentration. Conducts chloride currents in the stria vascularis of the inner ear to establish the endocochlear potential necessary for normal hearing. This is Chloride channel protein ClC-Ka (CLCNKA) from Oryctolagus cuniculus (Rabbit).